The primary structure comprises 395 residues: Argininosuccinate synthase (395 aa).

Residues 6 to 14 and Ala-33 each bind ATP; that span reads AYSGGLDTS. Tyr-84 contributes to the L-citrulline binding site. Gly-114 contacts ATP. 3 residues coordinate L-aspartate: Thr-116, Asn-120, and Asp-121. Residue Asn-120 coordinates L-citrulline. L-citrulline contacts are provided by Arg-124, Ser-173, Ser-182, Glu-258, and Tyr-270.

It belongs to the argininosuccinate synthase family. Type 1 subfamily. In terms of assembly, homotetramer.

The protein resides in the cytoplasm. The enzyme catalyses L-citrulline + L-aspartate + ATP = 2-(N(omega)-L-arginino)succinate + AMP + diphosphate + H(+). The protein operates within amino-acid biosynthesis; L-arginine biosynthesis; L-arginine from L-ornithine and carbamoyl phosphate: step 2/3. In Rhodococcoides fascians (Rhodococcus fascians), this protein is Argininosuccinate synthase.